Here is a 128-residue protein sequence, read N- to C-terminus: Small ribosomal subunit protein uS9 (128 aa).

Positions 97–113 are enriched in basic and acidic residues; it reads RSEGFMTRDSRSVERKK. Residues 97-128 are disordered; sequence RSEGFMTRDSRSVERKKPGQPKARRRFQFSKR. The segment covering 114 to 128 has biased composition (basic residues); sequence PGQPKARRRFQFSKR.

Belongs to the universal ribosomal protein uS9 family.

This Phocaeicola vulgatus (strain ATCC 8482 / DSM 1447 / JCM 5826 / CCUG 4940 / NBRC 14291 / NCTC 11154) (Bacteroides vulgatus) protein is Small ribosomal subunit protein uS9.